We begin with the raw amino-acid sequence, 103 residues long: Small ribosomal subunit protein uS10 (103 aa).

Belongs to the universal ribosomal protein uS10 family. As to quaternary structure, part of the 30S ribosomal subunit.

Its function is as follows. Involved in the binding of tRNA to the ribosomes. The protein is Small ribosomal subunit protein uS10 of Xylella fastidiosa (strain M12).